A 437-amino-acid polypeptide reads, in one-letter code: Trigger factor (437 aa).

In terms of domain architecture, PPIase FKBP-type spans 163–248 (SDRVIIDFEG…LNNVSEATLP (86 aa)).

It belongs to the FKBP-type PPIase family. Tig subfamily.

The protein resides in the cytoplasm. It carries out the reaction [protein]-peptidylproline (omega=180) = [protein]-peptidylproline (omega=0). Involved in protein export. Acts as a chaperone by maintaining the newly synthesized protein in an open conformation. Functions as a peptidyl-prolyl cis-trans isomerase. The polypeptide is Trigger factor (Neisseria meningitidis serogroup C / serotype 2a (strain ATCC 700532 / DSM 15464 / FAM18)).